A 381-amino-acid chain; its full sequence is Peptidoglycan glycosyltransferase MrdB (381 aa).

10 helical membrane passes run 11–31 (FDLL…LLIF), 40–60 (KQGV…FIPF), 66–86 (WLFV…FMGY), 99–119 (FISI…LLLA), 132–152 (YDWG…ALIL), 156–176 (DLGT…IVGL), 180–200 (VWLP…HFLH), 263–283 (FGFL…LHLF), 297–317 (IVAL…IAMT), and 328–348 (LPLF…FGIL).

This sequence belongs to the SEDS family. MrdB/RodA subfamily.

The protein resides in the cell inner membrane. The enzyme catalyses [GlcNAc-(1-&gt;4)-Mur2Ac(oyl-L-Ala-gamma-D-Glu-L-Lys-D-Ala-D-Ala)](n)-di-trans,octa-cis-undecaprenyl diphosphate + beta-D-GlcNAc-(1-&gt;4)-Mur2Ac(oyl-L-Ala-gamma-D-Glu-L-Lys-D-Ala-D-Ala)-di-trans,octa-cis-undecaprenyl diphosphate = [GlcNAc-(1-&gt;4)-Mur2Ac(oyl-L-Ala-gamma-D-Glu-L-Lys-D-Ala-D-Ala)](n+1)-di-trans,octa-cis-undecaprenyl diphosphate + di-trans,octa-cis-undecaprenyl diphosphate + H(+). It functions in the pathway cell wall biogenesis; peptidoglycan biosynthesis. Functionally, peptidoglycan polymerase that is essential for cell wall elongation. In Helicobacter pylori (strain ATCC 700392 / 26695) (Campylobacter pylori), this protein is Peptidoglycan glycosyltransferase MrdB.